We begin with the raw amino-acid sequence, 128 residues long: MSYYQGNDSRKITGGQKGKNRDKRKYELGSPPTETKISDKDIKEKDRVAGGNFKLRLRYASYANVYDPQSKTAKKVKIISVLESPANREYARRGIIVKGTLIQTELGKAKVTSRPGQDGIINALLLRE.

Residues 1 to 41 (MSYYQGNDSRKITGGQKGKNRDKRKYELGSPPTETKISDKD) form a disordered region.

The protein belongs to the eukaryotic ribosomal protein eS8 family. Part of the 30S ribosomal subunit.

The polypeptide is Small ribosomal subunit protein eS8 (Sulfolobus acidocaldarius (strain ATCC 33909 / DSM 639 / JCM 8929 / NBRC 15157 / NCIMB 11770)).